We begin with the raw amino-acid sequence, 787 residues long: Pyridoxal-dependent decarboxylase domain-containing protein 1 (787 aa).

The segment covering 26 to 44 (MLEKSPRRTEEENGKKPVS) has biased composition (basic and acidic residues). Residues 26 to 52 (MLEKSPRRTEEENGKKPVSEDIPGPLQ) form a disordered region. Residue Ser652 is modified to Phosphoserine. Positions 682 to 787 (QGTGVTPPPT…SQVEELERLR (106 aa)) are disordered. Phosphothreonine is present on residues Thr687 and Thr691. Phosphoserine is present on residues Ser710, Ser718, Ser722, and Ser748. Residues 725 to 748 (HIEDLEKVEQLSSGLEHDNLEAHS) are compositionally biased toward basic and acidic residues. Polar residues predominate over residues 759-771 (TARQTEALQNQAQ). Residues 772–787 (HQEDDHSQVEELERLR) show a composition bias toward basic and acidic residues. Ser778 carries the post-translational modification Phosphoserine.

This sequence belongs to the group II decarboxylase family. It depends on pyridoxal 5'-phosphate as a cofactor.

This Mus musculus (Mouse) protein is Pyridoxal-dependent decarboxylase domain-containing protein 1 (Pdxdc1).